The primary structure comprises 796 residues: Disintegrin and metalloproteinase domain-containing protein B (796 aa).

The N-terminal stretch at 1 to 23 (MKALSCLLAVIATAGSLFQHVDA) is a signal peptide. At 24 to 706 (RSHARDRLNN…VSDWVSRHKP (683 aa)) the chain is on the extracellular side. N-linked (GlcNAc...) asparagine glycosylation is found at asparagine 33, asparagine 226, asparagine 313, and asparagine 407. In terms of domain architecture, Peptidase M12B spans 271-510 (RVALIGVVAD…HSILTNCLTT (240 aa)). Disulfide bonds link cysteine 395–cysteine 495, cysteine 448–cysteine 459, and cysteine 580–cysteine 600. A Zn(2+)-binding site is contributed by histidine 431. Residue glutamate 432 is part of the active site. Zn(2+) contacts are provided by histidine 435 and histidine 441. The 90-residue stretch at 519 to 608 (GQQCGNGIVE…DCPRDTHSKN (90 aa)) folds into the Disintegrin domain. Residues 707–727 (IVIGVAVGVGCLLLLAILSCI) traverse the membrane as a helical segment. The Cytoplasmic segment spans residues 728–796 (CGRSKKRRPR…PGRMPSTRYA (69 aa)). Residues 737 to 796 (RNRKMAPINMRPMPPVYNGWTGPPPNAESPGGHPQYNHVPPPINAPPPAYPGRMPSTRYA) are disordered. The span at 775–786 (VPPPINAPPPAY) shows a compositional bias: pro residues.

Requires Zn(2+) as cofactor.

The protein resides in the membrane. Functionally, probable zinc protease. The protein is Disintegrin and metalloproteinase domain-containing protein B (ADM-B) of Arthroderma otae (strain ATCC MYA-4605 / CBS 113480) (Microsporum canis).